The following is a 590-amino-acid chain: Monoterepene synthase TPS1, chloropastic (590 aa).

Residues 1-42 (MALNTFLHFPPCSLSSFSCAVPKLPLAIFHKTMARQIRCPRA) constitute a chloroplast transit peptide. Residues Arg304, Asp341, Asp345, Arg483, and Asp486 each coordinate (2E)-geranyl diphosphate. Asp341 and Asp345 together coordinate Mg(2+). A DDXXD motif motif is present at residues 341 to 345 (DDMYD). 3 residues coordinate Mg(2+): Asp486, Thr490, and Glu494.

Belongs to the terpene synthase family. Tpsb subfamily. Monomer. The cofactor is Mg(2+).

The protein resides in the plastid. Its subcellular location is the chloroplast. The catalysed reaction is (2E)-geranyl diphosphate = beta-thujene + diphosphate. The enzyme catalyses (2E)-geranyl diphosphate = sabinene + diphosphate. It catalyses the reaction (2E)-geranyl diphosphate = beta-pinene + diphosphate. It carries out the reaction (2E)-geranyl diphosphate = alpha-terpinene + diphosphate. The protein operates within secondary metabolite biosynthesis; terpenoid biosynthesis. Its function is as follows. Monoterpene synthase involved in the biosynthesis of volatile organic compounds. Mediates the conversion of (2E)-geranyl diphosphate (GPP) into beta-thujene, sabinene, beta-pinene and alpha-terpinene. Does not use (2E,6E)-farnesyl diphosphate (FPP) as substrate. The sequence is that of Monoterepene synthase TPS1, chloropastic from Cananga odorata (Ylang-ylang tree).